The chain runs to 408 residues: Type II methyltransferase M.VspI (408 aa).

Belongs to the N(4)/N(6)-methyltransferase family.

It catalyses the reaction a 2'-deoxyadenosine in DNA + S-adenosyl-L-methionine = an N(6)-methyl-2'-deoxyadenosine in DNA + S-adenosyl-L-homocysteine + H(+). A gamma subtype methylase, recognizes the double-stranded sequence 5'-ATTAAT-3', methylates A-5 on both strands, and protects the DNA from cleavage by the VspI endonuclease. The protein is Type II methyltransferase M.VspI of Vibrio sp. (strain 343).